Consider the following 466-residue polypeptide: NADPH:adrenodoxin oxidoreductase, mitochondrial (466 aa).

Residues A40, E61, L69, and L105 each contribute to the FAD site. Residues 176–179 (QGNV), 220–221 (RR), and E232 contribute to the NADP(+) site. FAD is bound by residues W379 and 386–388 (GVI). Residue G386 coordinates NADP(+).

It belongs to the ferredoxin--NADP reductase type 1 family. FAD serves as cofactor. Expressed predominantly in prothoracic gland of the larval ring gland and nurse cells of the adult ovary. Low expression is all adult tissues examined.

Its subcellular location is the mitochondrion inner membrane. The catalysed reaction is 2 reduced [adrenodoxin] + NADP(+) + H(+) = 2 oxidized [adrenodoxin] + NADPH. It functions in the pathway steroid metabolism; cholesterol metabolism. Required for synthesis of steroid hormones, for olfactory sensory behavior and completion of the second larval molt (a steroid mediated developmental transition) and pupariation. This Drosophila melanogaster (Fruit fly) protein is NADPH:adrenodoxin oxidoreductase, mitochondrial (dare).